We begin with the raw amino-acid sequence, 500 residues long: L-2-amino-4-chloropent-4-enoate dechlorinase/desaturase (500 aa).

K311 is modified (N6-(pyridoxal phosphate)lysine).

The protein belongs to the trans-sulfuration enzymes family. Requires pyridoxal 5'-phosphate as cofactor.

It carries out the reaction L-2-amino-4-chloropent-4-enoate = L-propargylglycine + chloride + H(+). It functions in the pathway amino-acid metabolism. The protein operates within antibiotic biosynthesis. Functionally, involved in the biosynthesis of terminal alkyne-containing amino acids such as L-propargylglycine (Pra) and L-beta-ethynylserine, that are produced as antibiotics by S.cattleya. Catalyzes gamma-elimination of chloride from 4-chloro-allyl-L-glycine (also named L-2-amino-4-chloropent-4-enoate), followed by an isomerization, to form the terminal-alkyne product L-propargylglycine. In Streptantibioticus cattleyicolor (strain ATCC 35852 / DSM 46488 / JCM 4925 / NBRC 14057 / NRRL 8057) (Streptomyces cattleya), this protein is L-2-amino-4-chloropent-4-enoate dechlorinase/desaturase.